Reading from the N-terminus, the 305-residue chain is Sulfate adenylyltransferase subunit 2 (305 aa).

It belongs to the PAPS reductase family. CysD subfamily. As to quaternary structure, heterodimer composed of CysD, the smaller subunit, and CysN.

It catalyses the reaction sulfate + ATP + H(+) = adenosine 5'-phosphosulfate + diphosphate. It functions in the pathway sulfur metabolism; hydrogen sulfide biosynthesis; sulfite from sulfate: step 1/3. With CysN forms the ATP sulfurylase (ATPS) that catalyzes the adenylation of sulfate producing adenosine 5'-phosphosulfate (APS) and diphosphate, the first enzymatic step in sulfur assimilation pathway. APS synthesis involves the formation of a high-energy phosphoric-sulfuric acid anhydride bond driven by GTP hydrolysis by CysN coupled to ATP hydrolysis by CysD. This Pseudomonas fluorescens (strain SBW25) protein is Sulfate adenylyltransferase subunit 2.